Consider the following 309-residue polypeptide: MPIRVPDELPAVSFLRNENVFVMTSSRAKTQEIRPLKVLVLNLMPKKIETENQFLRLLSNSPLQIDIQLLRIDSRESKNTPAEHLNNFYCDFEDIQEQNFDGLIVTGAPLGLVDFCDVAYWPQIERIIAWAKDHVTSTLFVCWAVQAALNILYGIPKMTRETKLSGIYQHQTDKPLALLTRGFDETFLAPHSRYADFPVELLQQYTDLDILVSSEEAGAYLFASKDKRVAFVTGHPEYDVDTLAGEYQRDLAAGLNPQIPLNYFPNDDASLPPKASWRSHGHLLFANWLNYYVYQITPFDLRHMNPTLD.

The active-site Acyl-thioester intermediate is the Cys142. Positions 163 and 192 each coordinate substrate. His235 functions as the Proton acceptor in the catalytic mechanism. Glu237 is a catalytic residue. Substrate is bound at residue Arg249.

It belongs to the MetA family.

The protein resides in the cytoplasm. It catalyses the reaction L-homoserine + succinyl-CoA = O-succinyl-L-homoserine + CoA. Its pathway is amino-acid biosynthesis; L-methionine biosynthesis via de novo pathway; O-succinyl-L-homoserine from L-homoserine: step 1/1. Transfers a succinyl group from succinyl-CoA to L-homoserine, forming succinyl-L-homoserine. The chain is Homoserine O-succinyltransferase from Yersinia enterocolitica serotype O:8 / biotype 1B (strain NCTC 13174 / 8081).